The following is a 66-amino-acid chain: Large ribosomal subunit protein bL35 (66 aa).

Positions 22 to 41 are disordered; sequence VMSAQRGKRHGMIKRTKKQI. Basic residues predominate over residues 27 to 41; that stretch reads RGKRHGMIKRTKKQI.

This sequence belongs to the bacterial ribosomal protein bL35 family.

The polypeptide is Large ribosomal subunit protein bL35 (Rhodopseudomonas palustris (strain TIE-1)).